Here is a 346-residue protein sequence, read N- to C-terminus: Flap endonuclease 1 (346 aa).

The tract at residues 1 to 102 (MGVTELGKLI…AEIEERRKVK (102 aa)) is N-domain. Residues D31, D84, E156, E158, D177, D179, and D239 each contribute to the Mg(2+) site. The tract at residues 120 to 261 (DVAKYMKRAV…KALKLVWEFG (142 aa)) is I-domain.

Belongs to the XPG/RAD2 endonuclease family. FEN1 subfamily. Interacts with PCNA. PCNA stimulates the nuclease activity without altering cleavage specificity. Mg(2+) is required as a cofactor.

Functionally, structure-specific nuclease with 5'-flap endonuclease and 5'-3' exonuclease activities involved in DNA replication and repair. During DNA replication, cleaves the 5'-overhanging flap structure that is generated by displacement synthesis when DNA polymerase encounters the 5'-end of a downstream Okazaki fragment. Binds the unpaired 3'-DNA end and kinks the DNA to facilitate 5' cleavage specificity. Cleaves one nucleotide into the double-stranded DNA from the junction in flap DNA, leaving a nick for ligation. Also involved in the base excision repair (BER) pathway. Acts as a genome stabilization factor that prevents flaps from equilibrating into structures that lead to duplications and deletions. Also possesses 5'-3' exonuclease activity on nicked or gapped double-stranded DNA. The sequence is that of Flap endonuclease 1 from Pyrobaculum islandicum (strain DSM 4184 / JCM 9189 / GEO3).